The following is a 438-amino-acid chain: sn-glycerol-3-phosphate-binding periplasmic protein UgpB (438 aa).

An N-terminal signal peptide occupies residues 1 to 23 (MKPLRYTASALALGLALMANAQA). The sn-glycerol 3-phosphate site is built by tyrosine 65, glutamate 89, serine 144, serine 270, glycine 307, tyrosine 346, and arginine 397.

Belongs to the bacterial solute-binding protein 1 family. As to quaternary structure, the complex is composed of two ATP-binding proteins (UgpC), two transmembrane proteins (UgpA and UgpE) and a solute-binding protein (UgpB).

Its subcellular location is the periplasm. In terms of biological role, part of the ABC transporter complex UgpBAEC involved in sn-glycerol-3-phosphate (G3P) import. Binds G3P. In Escherichia coli O6:K15:H31 (strain 536 / UPEC), this protein is sn-glycerol-3-phosphate-binding periplasmic protein UgpB (ugpB).